The following is a 596-amino-acid chain: Arginine--tRNA ligase (596 aa).

Residues 128-138 carry the 'HIGH' region motif; it reads ANPTSSLHVGH.

Belongs to the class-I aminoacyl-tRNA synthetase family. In terms of assembly, monomer.

Its subcellular location is the cytoplasm. The enzyme catalyses tRNA(Arg) + L-arginine + ATP = L-arginyl-tRNA(Arg) + AMP + diphosphate. This is Arginine--tRNA ligase from Acinetobacter baumannii (strain AB307-0294).